The chain runs to 388 residues: Succinate--CoA ligase [ADP-forming] subunit beta (388 aa).

One can recognise an ATP-grasp domain in the interval 9-244 (KQLFARYGLP…QSQEDPRAAQ (236 aa)). Residues Lys-46, 53-55 (GRG), Glu-99, Thr-102, and Glu-107 each bind ATP. Positions 199 and 213 each coordinate Mg(2+). Substrate contacts are provided by residues Asn-264 and 321–323 (GIV).

Belongs to the succinate/malate CoA ligase beta subunit family. In terms of assembly, heterotetramer of two alpha and two beta subunits. It depends on Mg(2+) as a cofactor.

It carries out the reaction succinate + ATP + CoA = succinyl-CoA + ADP + phosphate. The catalysed reaction is GTP + succinate + CoA = succinyl-CoA + GDP + phosphate. It participates in carbohydrate metabolism; tricarboxylic acid cycle; succinate from succinyl-CoA (ligase route): step 1/1. Succinyl-CoA synthetase functions in the citric acid cycle (TCA), coupling the hydrolysis of succinyl-CoA to the synthesis of either ATP or GTP and thus represents the only step of substrate-level phosphorylation in the TCA. The beta subunit provides nucleotide specificity of the enzyme and binds the substrate succinate, while the binding sites for coenzyme A and phosphate are found in the alpha subunit. The sequence is that of Succinate--CoA ligase [ADP-forming] subunit beta from Shigella flexneri serotype 5b (strain 8401).